Reading from the N-terminus, the 144-residue chain is D-aminoacyl-tRNA deacylase (144 aa).

The Gly-cisPro motif, important for rejection of L-amino acids signature appears at 136 to 137; sequence GP.

This sequence belongs to the DTD family. As to quaternary structure, homodimer.

It is found in the cytoplasm. It catalyses the reaction glycyl-tRNA(Ala) + H2O = tRNA(Ala) + glycine + H(+). It carries out the reaction a D-aminoacyl-tRNA + H2O = a tRNA + a D-alpha-amino acid + H(+). Functionally, an aminoacyl-tRNA editing enzyme that deacylates mischarged D-aminoacyl-tRNAs. Also deacylates mischarged glycyl-tRNA(Ala), protecting cells against glycine mischarging by AlaRS. Acts via tRNA-based rather than protein-based catalysis; rejects L-amino acids rather than detecting D-amino acids in the active site. By recycling D-aminoacyl-tRNA to D-amino acids and free tRNA molecules, this enzyme counteracts the toxicity associated with the formation of D-aminoacyl-tRNA entities in vivo and helps enforce protein L-homochirality. The sequence is that of D-aminoacyl-tRNA deacylase from Aliivibrio salmonicida (strain LFI1238) (Vibrio salmonicida (strain LFI1238)).